The chain runs to 84 residues: MKKGLHPESYRPVVFKDMSNGDMFLSKSTVATKETIEFEGETYPLLKIEISNTSHPFYTGKSTLVDTAGRVDKFMSRYGDRKKK.

Belongs to the bacterial ribosomal protein bL31 family. Type B subfamily. Part of the 50S ribosomal subunit.

The chain is Large ribosomal subunit protein bL31B from Bacteroides thetaiotaomicron (strain ATCC 29148 / DSM 2079 / JCM 5827 / CCUG 10774 / NCTC 10582 / VPI-5482 / E50).